We begin with the raw amino-acid sequence, 450 residues long: Chromosomal replication initiator protein DnaA (450 aa).

Residues 1–71 (MEDVWLQAQS…SVRSLTDSHF (71 aa)) are domain I, interacts with DnaA modulators. Residues 71–113 (FQVELQVAARQQEKTAKSPRKSHTEDELGPVESEKCAPAEFST) are domain II. The tract at residues 82–103 (QEKTAKSPRKSHTEDELGPVES) is disordered. Residues 114–330 (NLNAKYTFDT…GMLIRLGAVA (217 aa)) form a domain III, AAA+ region region. Positions 158, 160, 161, and 162 each coordinate ATP. The domain IV, binds dsDNA stretch occupies residues 331-450 (SLTGKNITLD…IETLRKGLLN (120 aa)).

The protein belongs to the DnaA family. Oligomerizes as a right-handed, spiral filament on DNA at oriC.

It localises to the cytoplasm. In terms of biological role, plays an essential role in the initiation and regulation of chromosomal replication. ATP-DnaA binds to the origin of replication (oriC) to initiate formation of the DNA replication initiation complex once per cell cycle. Binds the DnaA box (a 9 base pair repeat at the origin) and separates the double-stranded (ds)DNA. Forms a right-handed helical filament on oriC DNA; dsDNA binds to the exterior of the filament while single-stranded (ss)DNA is stabiized in the filament's interior. The ATP-DnaA-oriC complex binds and stabilizes one strand of the AT-rich DNA unwinding element (DUE), permitting loading of DNA polymerase. After initiation quickly degrades to an ADP-DnaA complex that is not apt for DNA replication. Binds acidic phospholipids. The protein is Chromosomal replication initiator protein DnaA of Geobacter metallireducens (strain ATCC 53774 / DSM 7210 / GS-15).